A 1201-amino-acid chain; its full sequence is DNA-directed RNA polymerase subunit beta (1201 aa).

Residues 1165-1201 (DALSKFKQQQDEKAADKAAKADAAKPSETTNAQQDNQ) form a disordered region. Residues 1172-1189 (QQQDEKAADKAAKADAAK) are compositionally biased toward basic and acidic residues. A compositionally biased stretch (polar residues) spans 1191–1201 (SETTNAQQDNQ).

The protein belongs to the RNA polymerase beta chain family. In terms of assembly, the RNAP catalytic core consists of 2 alpha, 1 beta, 1 beta' and 1 omega subunit. When a sigma factor is associated with the core the holoenzyme is formed, which can initiate transcription.

The enzyme catalyses RNA(n) + a ribonucleoside 5'-triphosphate = RNA(n+1) + diphosphate. DNA-dependent RNA polymerase catalyzes the transcription of DNA into RNA using the four ribonucleoside triphosphates as substrates. In Lactiplantibacillus plantarum (strain ATCC BAA-793 / NCIMB 8826 / WCFS1) (Lactobacillus plantarum), this protein is DNA-directed RNA polymerase subunit beta.